Reading from the N-terminus, the 206-residue chain is Thymidylate kinase (206 aa).

ATP is bound at residue 11 to 18 (GIDGAGKT).

Belongs to the thymidylate kinase family.

The enzyme catalyses dTMP + ATP = dTDP + ADP. Functionally, phosphorylation of dTMP to form dTDP in both de novo and salvage pathways of dTTP synthesis. This is Thymidylate kinase from Burkholderia lata (strain ATCC 17760 / DSM 23089 / LMG 22485 / NCIMB 9086 / R18194 / 383).